Here is a 268-residue protein sequence, read N- to C-terminus: 4-diphosphocytidyl-2-C-methyl-D-erythritol kinase (268 aa).

Lysine 10 is a catalytic residue. Residue 101 to 111 coordinates ATP; sequence PTQAGLGGGST. Aspartate 143 is a catalytic residue.

It belongs to the GHMP kinase family. IspE subfamily.

The enzyme catalyses 4-CDP-2-C-methyl-D-erythritol + ATP = 4-CDP-2-C-methyl-D-erythritol 2-phosphate + ADP + H(+). The protein operates within isoprenoid biosynthesis; isopentenyl diphosphate biosynthesis via DXP pathway; isopentenyl diphosphate from 1-deoxy-D-xylulose 5-phosphate: step 3/6. In terms of biological role, catalyzes the phosphorylation of the position 2 hydroxy group of 4-diphosphocytidyl-2C-methyl-D-erythritol. The sequence is that of 4-diphosphocytidyl-2-C-methyl-D-erythritol kinase from Helicobacter pylori (strain ATCC 700392 / 26695) (Campylobacter pylori).